The chain runs to 163 residues: ATP synthase subunit b 1 (163 aa).

Residues 5–25 (FDATFFAFVGLILFLALVVYL) form a helical membrane-spanning segment.

The protein belongs to the ATPase B chain family. In terms of assembly, F-type ATPases have 2 components, F(1) - the catalytic core - and F(0) - the membrane proton channel. F(1) has five subunits: alpha(3), beta(3), gamma(1), delta(1), epsilon(1). F(0) has three main subunits: a(1), b(2) and c(10-14). The alpha and beta chains form an alternating ring which encloses part of the gamma chain. F(1) is attached to F(0) by a central stalk formed by the gamma and epsilon chains, while a peripheral stalk is formed by the delta and b chains.

Its subcellular location is the cell inner membrane. F(1)F(0) ATP synthase produces ATP from ADP in the presence of a proton or sodium gradient. F-type ATPases consist of two structural domains, F(1) containing the extramembraneous catalytic core and F(0) containing the membrane proton channel, linked together by a central stalk and a peripheral stalk. During catalysis, ATP synthesis in the catalytic domain of F(1) is coupled via a rotary mechanism of the central stalk subunits to proton translocation. Its function is as follows. Component of the F(0) channel, it forms part of the peripheral stalk, linking F(1) to F(0). This is ATP synthase subunit b 1 from Rhizobium etli (strain ATCC 51251 / DSM 11541 / JCM 21823 / NBRC 15573 / CFN 42).